Here is a 473-residue protein sequence, read N- to C-terminus: tRNA modification GTPase MnmE (473 aa).

(6S)-5-formyl-5,6,7,8-tetrahydrofolate is bound by residues Arg28, Glu93, and Arg132. The 167-residue stretch at 228 to 394 (GVATVLVGSP…LKQQMSNMVA (167 aa)) folds into the TrmE-type G domain. Residues 238–243 (NAGKST), 257–263 (SHQPGTT), and 282–285 (DTAG) contribute to the GTP site. The Mg(2+) site is built by Ser242 and Thr263. Lys473 is a binding site for (6S)-5-formyl-5,6,7,8-tetrahydrofolate.

This sequence belongs to the TRAFAC class TrmE-Era-EngA-EngB-Septin-like GTPase superfamily. TrmE GTPase family. As to quaternary structure, homodimer. Heterotetramer of two MnmE and two MnmG subunits. K(+) serves as cofactor.

It localises to the cytoplasm. Functionally, exhibits a very high intrinsic GTPase hydrolysis rate. Involved in the addition of a carboxymethylaminomethyl (cmnm) group at the wobble position (U34) of certain tRNAs, forming tRNA-cmnm(5)s(2)U34. The protein is tRNA modification GTPase MnmE of Chlorobium chlorochromatii (strain CaD3).